Consider the following 103-residue polypeptide: N(4)-acetylcytidine amidohydrolase (103 aa).

In terms of domain architecture, ASCH spans 6-100; sequence ITFFQRFQDD…GESQFYVIEF (95 aa). Catalysis depends on Lys21, which acts as the Proton acceptor. Thr24 (nucleophile) is an active-site residue. The Proton donor role is filled by Glu74.

The protein belongs to the N(4)-acetylcytidine amidohydrolase family.

It catalyses the reaction N(4)-acetylcytidine + H2O = cytidine + acetate + H(+). The enzyme catalyses N(4)-acetyl-2'-deoxycytidine + H2O = 2'-deoxycytidine + acetate + H(+). The catalysed reaction is N(4)-acetylcytosine + H2O = cytosine + acetate + H(+). Its function is as follows. Catalyzes the hydrolysis of N(4)-acetylcytidine (ac4C). In Klebsiella pneumoniae subsp. pneumoniae (strain ATCC 700721 / MGH 78578), this protein is N(4)-acetylcytidine amidohydrolase.